The primary structure comprises 130 residues: Large ribosomal subunit protein bL19 (130 aa).

It belongs to the bacterial ribosomal protein bL19 family.

Functionally, this protein is located at the 30S-50S ribosomal subunit interface and may play a role in the structure and function of the aminoacyl-tRNA binding site. The polypeptide is Large ribosomal subunit protein bL19 (Burkholderia ambifaria (strain ATCC BAA-244 / DSM 16087 / CCUG 44356 / LMG 19182 / AMMD) (Burkholderia cepacia (strain AMMD))).